Reading from the N-terminus, the 151-residue chain is Ribonuclease H (151 aa).

Positions 1–141 constitute an RNase H type-1 domain; sequence MQEVTVYSDG…ADALANKGVE (141 aa). D9, E47, D69, and D133 together coordinate Mg(2+).

Belongs to the RNase H family. Monomer. Mg(2+) serves as cofactor.

It localises to the cytoplasm. The catalysed reaction is Endonucleolytic cleavage to 5'-phosphomonoester.. In terms of biological role, endonuclease that specifically degrades the RNA of RNA-DNA hybrids. The polypeptide is Ribonuclease H (Ralstonia nicotianae (strain ATCC BAA-1114 / GMI1000) (Ralstonia solanacearum)).